The primary structure comprises 469 residues: Neuraminidase (469 aa).

Residues 1–6 lie on the Intravirion side of the membrane; it reads MNPNQK. Residues 7 to 27 traverse the membrane as a helical segment; it reads LFASSGIAIALGIINLLIGIS. An involved in apical transport and lipid raft association region spans residues 11–33; that stretch reads SGIAIALGIINLLIGISNMSLNI. Residues asparagine 28, asparagine 32, asparagine 46, asparagine 55, asparagine 56, asparagine 65, asparagine 66, and asparagine 85 are each glycosylated (N-linked (GlcNAc...) asparagine; by host). Residues 28–469 lie on the Virion surface side of the membrane; the sequence is NMSLNISLYS…PDGAQIKYFS (442 aa). The interval 36–85 is hypervariable stalk region; that stretch reads YSKGENHKSDNLTCTNINQNNTTMVNTYINNTTIIDKNTKMENPGYLLLN. The interval 88-469 is head of neuraminidase; it reads LCNVEGWVVI…PDGAQIKYFS (382 aa). 8 disulfide bridges follow: cysteine 89–cysteine 417, cysteine 121–cysteine 126, cysteine 181–cysteine 228, cysteine 230–cysteine 235, cysteine 276–cysteine 289, cysteine 278–cysteine 287, cysteine 316–cysteine 334, and cysteine 421–cysteine 448. Arginine 115 provides a ligand contact to substrate. Asparagine 143 carries an N-linked (GlcNAc...) asparagine; by host glycan. The Proton donor/acceptor role is filled by aspartate 148. Substrate is bound at residue arginine 149. 2 N-linked (GlcNAc...) asparagine; by host glycosylation sites follow: asparagine 198 and asparagine 232. 274–275 is a substrate binding site; that stretch reads EE. Arginine 290 is a binding site for substrate. Ca(2+)-binding residues include aspartate 291, glycine 295, and aspartate 322. The N-linked (GlcNAc...) asparagine; by host glycan is linked to asparagine 356. Arginine 369 is a binding site for substrate. N-linked (GlcNAc...) asparagine; by host glycosylation is present at asparagine 399. Catalysis depends on tyrosine 403, which acts as the Nucleophile.

The protein belongs to the glycosyl hydrolase 34 family. As to quaternary structure, homotetramer. Ca(2+) serves as cofactor. In terms of processing, N-glycosylated.

The protein resides in the virion membrane. It localises to the host apical cell membrane. It catalyses the reaction Hydrolysis of alpha-(2-&gt;3)-, alpha-(2-&gt;6)-, alpha-(2-&gt;8)- glycosidic linkages of terminal sialic acid residues in oligosaccharides, glycoproteins, glycolipids, colominic acid and synthetic substrates.. Its activity is regulated as follows. Inhibited by the neuraminidase inhibitors zanamivir (Relenza) and oseltamivir (Tamiflu). These drugs interfere with the release of progeny virus from infected cells and are effective against all influenza strains. Resistance to neuraminidase inhibitors is quite rare. In terms of biological role, catalyzes the removal of terminal sialic acid residues from viral and cellular glycoconjugates. Cleaves off the terminal sialic acids on the glycosylated HA during virus budding to facilitate virus release. Additionally helps virus spread through the circulation by further removing sialic acids from the cell surface. These cleavages prevent self-aggregation and ensure the efficient spread of the progeny virus from cell to cell. Otherwise, infection would be limited to one round of replication. Described as a receptor-destroying enzyme because it cleaves a terminal sialic acid from the cellular receptors. May facilitate viral invasion of the upper airways by cleaving the sialic acid moieties on the mucin of the airway epithelial cells. Likely to plays a role in the budding process through its association with lipid rafts during intracellular transport. May additionally display a raft-association independent effect on budding. Plays a role in the determination of host range restriction on replication and virulence. Sialidase activity in late endosome/lysosome traffic seems to enhance virus replication. This chain is Neuraminidase, found in Influenza A virus (strain A/Equine/Prague/1/1956 H7N7).